We begin with the raw amino-acid sequence, 150 residues long: MKSKRHTKILEIISSKEIETQEDLAEELKLQGFDVTQATVSRDIKNLKLIKIQGASGNYKYVVSSGEEKNIIDRLSNILSNTVISAENVDKMVVIKTLSGSGSAAAEAIDNLEGADVAGTVAGDNTIFILLRSLEKAEELVAKIRKRISI.

The protein belongs to the ArgR family.

Its subcellular location is the cytoplasm. It participates in amino-acid biosynthesis; L-arginine biosynthesis [regulation]. In terms of biological role, regulates arginine biosynthesis genes. In Clostridium botulinum (strain Alaska E43 / Type E3), this protein is Arginine repressor.